A 203-amino-acid polypeptide reads, in one-letter code: tRNA (cytidine(56)-2'-O)-methyltransferase (203 aa).

S-adenosyl-L-methionine contacts are provided by residues Leu-80, 109–113 (GAEKV), and 127–134 (IGNQPHSE). The disordered stretch occupies residues 178–203 (AEQDKAEGKATPGKNWENSGFTGDNP). The segment covering 193–203 (WENSGFTGDNP) has biased composition (polar residues).

Belongs to the aTrm56 family. As to quaternary structure, homodimer.

It localises to the cytoplasm. It carries out the reaction cytidine(56) in tRNA + S-adenosyl-L-methionine = 2'-O-methylcytidine(56) in tRNA + S-adenosyl-L-homocysteine + H(+). Specifically catalyzes the AdoMet-dependent 2'-O-ribose methylation of cytidine at position 56 in tRNAs. The sequence is that of tRNA (cytidine(56)-2'-O)-methyltransferase from Pyrococcus horikoshii (strain ATCC 700860 / DSM 12428 / JCM 9974 / NBRC 100139 / OT-3).